The primary structure comprises 757 residues: Lysyl oxidase homolog 4 (757 aa).

Residues 1–25 form the signal peptide; it reads MWFLPAALPLLPLLLLLGQAPPSRP. SRCR domains follow at residues 33 to 134, 160 to 288, 312 to 412, and 422 to 530; these read LRLV…VVCN, VRLK…VSCV, VRLR…VRCN, and VRLA…VSCT. Cystine bridges form between C59/C123, C72/C133, C103/C113, C192/C277, C205/C287, C252/C262, C337/C401, C350/C411, C381/C391, C451/C516, C464/C529, C498/C508, C559/C565, C611/C659, C643/C649, C671/C681, and C718/C732. N-linked (GlcNAc...) asparagine glycosylation is present at N199. The lysyl-oxidase like stretch occupies residues 534–737; sequence PDLVMNAQLV…WLHNCHTGDS (204 aa). Residues H612, H614, and H616 each contribute to the Cu cation site. The N-linked (GlcNAc...) asparagine glycan is linked to N630. Residues 639–675 constitute a cross-link (lysine tyrosylquinone (Lys-Tyr)); the sequence is KASFCLEDTNCPTGMQRRYACANFGEQGVTVGCWDTY. Y675 is subject to 2',4',5'-topaquinone.

Belongs to the lysyl oxidase family. It depends on Cu cation as a cofactor. Lysine tyrosylquinone residue serves as cofactor. The lysine tyrosylquinone cross-link (LTQ) is generated by condensation of the epsilon-amino group of a lysine with a topaquinone produced by oxidation of tyrosine. Post-translationally, may be proteolytically cleaved by BMP1.

It is found in the secreted. The protein resides in the extracellular space. It catalyses the reaction L-lysyl-[protein] + O2 + H2O = (S)-2-amino-6-oxohexanoyl-[protein] + H2O2 + NH4(+). Functionally, catalyzes the oxidative deamination of lysine and hydroxylysine residues in collagen and elastin, resulting in the formation of covalent cross-linkages, and the stabilization of collagen and elastin fibers. In Bos taurus (Bovine), this protein is Lysyl oxidase homolog 4 (LOXL4).